The chain runs to 127 residues: Large ribosomal subunit protein eL8 (127 aa).

This sequence belongs to the eukaryotic ribosomal protein eL8 family. Part of the 50S ribosomal subunit. Probably part of the RNase P complex.

The protein resides in the cytoplasm. Functionally, multifunctional RNA-binding protein that recognizes the K-turn motif in ribosomal RNA, the RNA component of RNase P, box H/ACA, box C/D and box C'/D' sRNAs. In Picrophilus torridus (strain ATCC 700027 / DSM 9790 / JCM 10055 / NBRC 100828 / KAW 2/3), this protein is Large ribosomal subunit protein eL8.